The sequence spans 210 residues: Probable molybdenum cofactor guanylyltransferase (210 aa).

GTP-binding positions include 18–20 (LAG), K31, N59, D86, and D111. Position 111 (D111) interacts with Mg(2+).

It belongs to the MobA family. It depends on Mg(2+) as a cofactor.

It localises to the cytoplasm. It catalyses the reaction Mo-molybdopterin + GTP + H(+) = Mo-molybdopterin guanine dinucleotide + diphosphate. In terms of biological role, transfers a GMP moiety from GTP to Mo-molybdopterin (Mo-MPT) cofactor (Moco or molybdenum cofactor) to form Mo-molybdopterin guanine dinucleotide (Mo-MGD) cofactor. The protein is Probable molybdenum cofactor guanylyltransferase (nasC) of Haloferax mediterranei (strain ATCC 33500 / DSM 1411 / JCM 8866 / NBRC 14739 / NCIMB 2177 / R-4) (Halobacterium mediterranei).